The chain runs to 350 residues: Vancomycin C-type resistance protein VanC2 (350 aa).

Residues Glu14 and Ser187 contribute to the active site. One can recognise an ATP-grasp domain in the interval 141–343; it reads HQAAAAIGVQ…YQELLQKLLV (203 aa). An ATP-binding site is contributed by 171-226; the sequence is IQTHGFPVFFKPNEAGSSKGITKVTCVEEIASALKEAFTYCSAVLLQKNIAGVEIG. Mg(2+)-binding residues include Asp297, Glu310, and Asn312. Positions 297, 310, and 312 each coordinate Mn(2+). The active site involves Ser321.

Belongs to the D-alanine--D-alanine ligase family. As to quaternary structure, homodimer. The cofactor is Mg(2+). Requires Mn(2+) as cofactor.

Its subcellular location is the cell membrane. It catalyses the reaction D-serine + D-alanine + ATP = D-alanyl-D-serine + ADP + phosphate + H(+). Its pathway is cell wall biogenesis; peptidoglycan biosynthesis. With respect to regulation, inhibited by D-cycloserine. Its function is as follows. Required for low-level resistance to the glycopeptide antibiotic vancomycin. D-alanine--D-alanine ligase of altered specificity, which catalyzes synthesis of D-Ala-D-Ser; produces a peptidoglycan which does not terminate in D-alanine but in D-serine, thus probably reducing affinity for vancomycin. Only insignificant catalytic synthesis of D-Ala-D-Ala in vitro. This is Vancomycin C-type resistance protein VanC2 from Enterococcus casseliflavus (Enterococcus flavescens).